The sequence spans 147 residues: Large ribosomal subunit protein bL9 (147 aa).

It belongs to the bacterial ribosomal protein bL9 family.

Binds to the 23S rRNA. This chain is Large ribosomal subunit protein bL9, found in Campylobacter jejuni subsp. jejuni serotype O:6 (strain 81116 / NCTC 11828).